The primary structure comprises 167 residues: NAD(P)H-quinone oxidoreductase subunit I, chloroplastic (167 aa).

4Fe-4S ferredoxin-type domains follow at residues 55 to 84 (GRIH…VDWK) and 95 to 124 (LNYS…MTEE). Cysteine 64, cysteine 67, cysteine 70, cysteine 74, cysteine 104, cysteine 107, cysteine 110, and cysteine 114 together coordinate [4Fe-4S] cluster.

The protein belongs to the complex I 23 kDa subunit family. NDH is composed of at least 16 different subunits, 5 of which are encoded in the nucleus. [4Fe-4S] cluster serves as cofactor.

It is found in the plastid. The protein resides in the chloroplast thylakoid membrane. It carries out the reaction a plastoquinone + NADH + (n+1) H(+)(in) = a plastoquinol + NAD(+) + n H(+)(out). The enzyme catalyses a plastoquinone + NADPH + (n+1) H(+)(in) = a plastoquinol + NADP(+) + n H(+)(out). NDH shuttles electrons from NAD(P)H:plastoquinone, via FMN and iron-sulfur (Fe-S) centers, to quinones in the photosynthetic chain and possibly in a chloroplast respiratory chain. The immediate electron acceptor for the enzyme in this species is believed to be plastoquinone. Couples the redox reaction to proton translocation, and thus conserves the redox energy in a proton gradient. This chain is NAD(P)H-quinone oxidoreductase subunit I, chloroplastic, found in Solanum tuberosum (Potato).